The following is a 593-amino-acid chain: Vicilin Jug r 2.0101 (593 aa).

Basic and acidic residues-rich tracts occupy residues 46–76 (LEED…EQRY) and 97–118 (RRCE…DRQD). The disordered stretch occupies residues 46 to 123 (LEEDQRSQEE…RDRQDPQQQY (78 aa)). IgE-binding stretches follow at residues 49 to 58 (DQRSQEERER), 76 to 85 (YEQCQQQCER), and 101 to 110 (QRRQQEERER). An igE-binding. Involved in cross-reactivity with peanut allergen Ara h 2; able to inhibit binding of IgE from a peanut-allergic patient to Ara h 2 region spans residues 140 to 149 (QRQCQQRCER). A compositionally biased stretch (basic and acidic residues) spans 150 to 178 (QYKEQQGRERGPEASPRRESRGREEEQQR). Positions 150–184 (QYKEQQGRERGPEASPRRESRGREEEQQRHNPYYF) are disordered. T-cell epitope; recognized by the HLA-DRB1-restricted CD4(+) T-cells regions lie at residues 175–193 (EQQR…RSRH) and 206–225 (FTER…VILD). Cu cation is bound at residue Tyr182. Cupin type-1 domains follow at residues 187–341 (QSIR…DRLE) and 386–556 (ISLK…EEIE). Asn229 carries an N-linked (GlcNAc...) asparagine glycan. T-cell epitope; recognized by the HLA-DRB1-restricted CD4(+) T-cells regions lie at residues 246 to 265 (TRGR…SFNL), 302 to 321 (PGQF…QSYL), 318 to 337 (QSYL…NTPR), 382 to 401 (SGGP…QFGQ), 414 to 433 (QEMD…MMVP), and 438 to 457 (KATV…MACP). Cys456 and His458 together coordinate Cu cation. The igE-binding stretch occupies residues 463-470 (SYEGQGRR). Residues 478-497 (TGRFQKVTARLARGDIFVIP) form a T-cell epitope; recognized by the HLA-DRB1-restricted CD4(+) T-cells region. His500 is a Cu cation binding site. The stretch at 529-556 (LAGQNNIINQLEREAKELSFNMPREEIE) forms a coiled coil. The igE-binding stretch occupies residues 541–555 (REAKELSFNMPREEI). T-cell epitope; recognized by the HLA-DRB1-restricted CD4(+) T-cells regions lie at residues 542–561 (EAKE…IFES) and 558–577 (IFES…SRRG).

It belongs to the 7S seed storage protein family. Proteolytically cleaved. As to expression, expressed in seed (at protein level).

In terms of biological role, seed storage protein. The sequence is that of Vicilin Jug r 2.0101 from Juglans regia (English walnut).